The following is a 475-amino-acid chain: Pregnancy-specific glycoprotein 22 (475 aa).

Residues 1 to 35 (MEVSSELLSNGWTSWQRVLLTASLLTCWLLPITAG) form the signal peptide. 3 consecutive Ig-like V-type domains span residues 44-140 (KLVE…FLQV), 162-260 (PASV…YLQV), and 280-380 (PVPP…QVNV). N-linked (GlcNAc...) asparagine glycosylation is found at N103, N110, and N231. The region spanning 387-471 (PVMRVTDSTV…SKTSLPVRLT (85 aa)) is the Ig-like C2-type domain. The cysteines at positions 406 and 454 are disulfide-linked.

The protein belongs to the immunoglobulin superfamily. CEA family.

The protein localises to the secreted. May have an angiogenic function during early placental development. Binds to cell-surface heparan sulfate proteoglycans (HSPGs), and stimulates secretion of the proangiogenic factors VEGFA and TGFB from uterine dendritic cells and natural killer cells. Also induces endothelial tube formation in vitro. In Mus musculus (Mouse), this protein is Pregnancy-specific glycoprotein 22.